Consider the following 388-residue polypeptide: Nuclear hormone receptor family member nhr-16 (388 aa).

Positions phenylalanine 11 to glutamine 86 form a DNA-binding region, nuclear receptor. 2 NR C4-type zinc fingers span residues cysteine 14 to cysteine 34 and cysteine 50 to cysteine 74. The NR LBD domain occupies proline 115 to arginine 387.

The protein belongs to the nuclear hormone receptor family.

It localises to the nucleus. Its function is as follows. Orphan nuclear receptor. This is Nuclear hormone receptor family member nhr-16 (nhr-16) from Caenorhabditis elegans.